The sequence spans 526 residues: Sugar transport protein 13 (526 aa).

Topologically, residues 1 to 18 (MTGGGFATSANGVEFEAK) are cytoplasmic. A helical transmembrane segment spans residues 19-39 (ITPIVIISCIMAATGGLMFGY). The Extracellular portion of the chain corresponds to 40 to 81 (DVGVSGGVTSMPDFLEKFFPVVYRKVVAGADKDSNYCKYDNQ). A helical membrane pass occupies residues 82-102 (GLQLFTSSLYLAGLTATFFAS). Topologically, residues 103–111 (YTTRTLGRR) are cytoplasmic. A helical transmembrane segment spans residues 112–132 (LTMLIAGVFFIIGVALNAGAQ). Over 133–141 (DLAMLIAGR) the chain is Extracellular. Residues 142 to 162 (ILLGCGVGFANQAVPLFLSEI) traverse the membrane as a helical segment. The Cytoplasmic segment spans residues 163–168 (APTRIR). A helical membrane pass occupies residues 169–189 (GGLNILFQLNVTIGILFANLV). Over 190-203 (NYGTAKIKGGWGWR) the chain is Extracellular. Residues 204–224 (LSLGLAGIPALLLTVGALLVT) form a helical membrane-spanning segment. The Cytoplasmic segment spans residues 225–296 (ETPNSLVERG…IAVALQIFQQ (72 aa)). The helical transmembrane segment at 297-317 (CTGINAIMFYAPVLFSTLGFG) threads the bilayer. Topologically, residues 318–319 (SD) are extracellular. The helical transmembrane segment at 320–340 (ASLYSAVVTGAVNVLSTLVSI) threads the bilayer. Topologically, residues 341–349 (YSVDKVGRR) are cytoplasmic. The helical transmembrane segment at 350–370 (VLLLEAGVQMFFSQVVIAIIL) threads the bilayer. At 371-383 (GVKVTDTSTNLSK) the chain is on the extracellular side. A helical membrane pass occupies residues 384-404 (GFAILVVVMICTYVAAFAWSW). Topologically, residues 405–426 (GPLGWLIPSETFPLETRSAGQS) are cytoplasmic. Residues 427 to 447 (VTVCVNLLFTFIIAQAFLSML) form a helical membrane-spanning segment. The Extracellular portion of the chain corresponds to 448–451 (CHFK). The chain crosses the membrane as a helical span at residues 452-472 (FGIFIFFSAWVLIMSVFVMFL). Residues 473-526 (LPETKNIPIEEMTERVWKKHWFWARFMDDHNDHEFVNGEKSNGKSNGFDPSTRL) lie on the Cytoplasmic side of the membrane.

Belongs to the major facilitator superfamily. Sugar transporter (TC 2.A.1.1) family.

It localises to the cell membrane. Mediates an active uptake of hexoses, probably by sugar/hydrogen symport. This is Sugar transport protein 13 (STP13) from Arabidopsis thaliana (Mouse-ear cress).